A 509-amino-acid chain; its full sequence is tRNA-2-methylthio-N(6)-dimethylallyladenosine synthase (509 aa).

The tract at residues 1–20 is disordered; sequence MNEKQKQESGQVNPADKTSE. In terms of domain architecture, MTTase N-terminal spans 66–184; the sequence is RKFYIRTYGC…LPELLSEAYL (119 aa). Positions 75, 111, 145, 221, 225, and 228 each coordinate [4Fe-4S] cluster. Positions 207 to 437 constitute a Radical SAM core domain; the sequence is RNGKIKGWVN…NDLVKEISAK (231 aa). The 64-residue stretch at 440–503 folds into the TRAM domain; it reads KEYEGRTVEV…TWSLDGVMAG (64 aa).

This sequence belongs to the methylthiotransferase family. MiaB subfamily. As to quaternary structure, monomer. [4Fe-4S] cluster serves as cofactor.

It localises to the cytoplasm. The catalysed reaction is N(6)-dimethylallyladenosine(37) in tRNA + (sulfur carrier)-SH + AH2 + 2 S-adenosyl-L-methionine = 2-methylsulfanyl-N(6)-dimethylallyladenosine(37) in tRNA + (sulfur carrier)-H + 5'-deoxyadenosine + L-methionine + A + S-adenosyl-L-homocysteine + 2 H(+). Its function is as follows. Catalyzes the methylthiolation of N6-(dimethylallyl)adenosine (i(6)A), leading to the formation of 2-methylthio-N6-(dimethylallyl)adenosine (ms(2)i(6)A) at position 37 in tRNAs that read codons beginning with uridine. The polypeptide is tRNA-2-methylthio-N(6)-dimethylallyladenosine synthase (Bacillus velezensis (strain DSM 23117 / BGSC 10A6 / LMG 26770 / FZB42) (Bacillus amyloliquefaciens subsp. plantarum)).